We begin with the raw amino-acid sequence, 368 residues long: N-acetylneuraminate epimerase (368 aa).

The signal sequence occupies residues 1 to 19 (MNKTIMALAIMMASFAANA). Kelch repeat units follow at residues 40-84 (TVYI…AFID), 86-137 (NLYV…FVHN), 139-173 (KAYV…KINA), 174-219 (HYFD…VNKG), 222-265 (TWLI…VAGG), 287-336 (ENYQ…PWNN), and 338-367 (LLII…VTVQ). The active-site Proton acceptor is the Glu-228.

It belongs to the NanM family. Homodimer.

The protein localises to the periplasm. The catalysed reaction is N-acetyl-alpha-neuraminate = N-acetyl-beta-neuraminate. Functionally, converts alpha-N-acetylneuranimic acid (Neu5Ac) to the beta-anomer, accelerating the equilibrium between the alpha- and beta-anomers. Probably facilitates sialidase-negative bacteria to compete successfully for limited amounts of extracellular Neu5Ac, which is likely taken up in the beta-anomer. In addition, the rapid removal of sialic acid from solution might be advantageous to the bacterium to damp down host responses. This chain is N-acetylneuraminate epimerase, found in Shigella flexneri serotype 5b (strain 8401).